A 396-amino-acid polypeptide reads, in one-letter code: Diphosphomevalonate decarboxylase (396 aa).

(R)-5-diphosphomevalonate contacts are provided by residues 19–22 (YWGK), Arg-74, 153–158 (SGSACR), and Thr-209.

Belongs to the diphosphomevalonate decarboxylase family. In terms of assembly, homodimer.

It carries out the reaction (R)-5-diphosphomevalonate + ATP = isopentenyl diphosphate + ADP + phosphate + CO2. Its pathway is isoprenoid biosynthesis; isopentenyl diphosphate biosynthesis via mevalonate pathway; isopentenyl diphosphate from (R)-mevalonate: step 3/3. Diphosphomevalonate decarboxylase; part of the second module of ergosterol biosynthesis pathway that includes the middle steps of the pathway. MVD1/ERG19 converts diphosphomevalonate into isopentenyl diphosphate. The second module is carried out in the vacuole and involves the formation of farnesyl diphosphate, which is also an important intermediate in the biosynthesis of ubiquinone, dolichol, heme and prenylated proteins. Activity by the mevalonate kinase ERG12 first converts mevalonate into 5-phosphomevalonate. 5-phosphomevalonate is then further converted to 5-diphosphomevalonate by the phosphomevalonate kinase ERG8. The diphosphomevalonate decarboxylase MVD1/ERG19 then produces isopentenyl diphosphate. The isopentenyl-diphosphate delta-isomerase IDI1 then catalyzes the 1,3-allylic rearrangement of the homoallylic substrate isopentenyl (IPP) to its highly electrophilic allylic isomer, dimethylallyl diphosphate (DMAPP). Finally the farnesyl diphosphate synthase ERG20 catalyzes the sequential condensation of isopentenyl pyrophosphate with dimethylallyl pyrophosphate, and then with the resultant geranylpyrophosphate to the ultimate product farnesyl pyrophosphate. The protein is Diphosphomevalonate decarboxylase of Saccharomyces cerevisiae (strain ATCC 204508 / S288c) (Baker's yeast).